We begin with the raw amino-acid sequence, 365 residues long: Mitogen-activated protein kinase HOG1 (365 aa).

Residues 20 to 306 (YSDLQPVGMG…ATNALAHEYL (287 aa)) enclose the Protein kinase domain. Residues 26 to 34 (VGMGAFGLV) and Lys49 each bind ATP. The Proton acceptor role is filled by Asp148. The TXY motif lies at 178–180 (TGY).

This sequence belongs to the protein kinase superfamily. Ser/Thr protein kinase family. MAP kinase subfamily. HOG1 sub-subfamily. Requires Mg(2+) as cofactor.

It localises to the cytoplasm. The protein localises to the nucleus. It catalyses the reaction L-seryl-[protein] + ATP = O-phospho-L-seryl-[protein] + ADP + H(+). The enzyme catalyses L-threonyl-[protein] + ATP = O-phospho-L-threonyl-[protein] + ADP + H(+). Functionally, proline-directed serine/threonine-protein kinase involved in a signal transduction pathway that is activated by changes in the osmolarity of the extracellular environment. Controls osmotic regulation of transcription of target genes. Involved in environmental stress response, hyphal growth, conidiation and possibly secondary metabolism such as ustiloxin biosynthesis or the biosynthesis of other phytotoxic compounds that are inhibitory to rice shoot growth during seed germination. Plays a key role in responses to cell wall and membrane stresses but not oxidative stress. This is Mitogen-activated protein kinase HOG1 from Ustilaginoidea virens (Rice false smut fungus).